A 165-amino-acid polypeptide reads, in one-letter code: Lipoprotein signal peptidase (165 aa).

3 helical membrane passes run 9–29 (PFLWISAVAFFTDLITKLAVV), 65–85 (WQKYFFILLALAVSFMILFFL), and 97–119 (TGYALMIGGALANAADRAYHGFV). Residues D121 and D139 contribute to the active site. Residues 134–154 (VFNVADIAICIGAGLLAIDAF) traverse the membrane as a helical segment.

It belongs to the peptidase A8 family.

Its subcellular location is the cell inner membrane. The catalysed reaction is Release of signal peptides from bacterial membrane prolipoproteins. Hydrolyzes -Xaa-Yaa-Zaa-|-(S,diacylglyceryl)Cys-, in which Xaa is hydrophobic (preferably Leu), and Yaa (Ala or Ser) and Zaa (Gly or Ala) have small, neutral side chains.. It participates in protein modification; lipoprotein biosynthesis (signal peptide cleavage). Its function is as follows. This protein specifically catalyzes the removal of signal peptides from prolipoproteins. This Histophilus somni (strain 2336) (Haemophilus somnus) protein is Lipoprotein signal peptidase.